The following is a 285-amino-acid chain: Probable cobalamin biosynthesis protein CobD (285 aa).

The next 4 membrane-spanning stretches (helical) occupy residues 10-32, 45-67, 145-167, and 266-283; these read LIDL…GKVI, YLDF…ILSH, VIAP…RAVN, and VYWI…IILY.

It belongs to the CobD/CbiB family.

Its subcellular location is the cell membrane. It participates in cofactor biosynthesis; adenosylcobalamin biosynthesis. In terms of biological role, converts cobyric acid to cobinamide by the addition of aminopropanol on the F carboxylic group. The polypeptide is Probable cobalamin biosynthesis protein CobD (Pyrococcus furiosus (strain ATCC 43587 / DSM 3638 / JCM 8422 / Vc1)).